The primary structure comprises 276 residues: MQSKFLWIAAASAATAAAQVPARLCGTAQPTMDDLVIAAGLAAEGKDNRRGLHPEDPIVVPTLFHVLAINETVAGGYLTEKSLQDQLDVMNADFGPSNVIFNLTATTRTVNRRWAQDLDEIPMRRALRQGGQETLNIYFMPYVSGYLGYCTFPNFWDAGSDEFIYDGCAVLSDSLPGGSLARYNLGRTATHEIGHWFDLFHTFSGGCGCVGDMIHDTPAMLNATGGCPVGKDTCPDRPGLDPIHNYMDYSDDACMNEFTPGQNFRMRSAWYNIRTK.

The first 17 residues, 1–17, serve as a signal peptide directing secretion; sequence MQSKFLWIAAASAATAA. 2 N-linked (GlcNAc...) asparagine glycosylation sites follow: N70 and N102. H191 contacts Zn(2+). E192 is an active-site residue. Position 195 (H195) interacts with Zn(2+). N222 carries N-linked (GlcNAc...) asparagine glycosylation. C227 and C254 are oxidised to a cystine.

Belongs to the peptidase M43B family.

The protein localises to the secreted. In terms of biological role, secreted metalloproteinase that allows assimilation of proteinaceous substrates. This is Extracellular metalloprotease VDBG_07883 from Verticillium alfalfae (strain VaMs.102 / ATCC MYA-4576 / FGSC 10136) (Verticillium wilt of alfalfa).